Here is a 569-residue protein sequence, read N- to C-terminus: Protein angel homolog 2 (569 aa).

3 disordered regions span residues 1 to 22 (MRKG…GVSP), 63 to 92 (LQHP…WSSW), and 109 to 155 (GLME…WLRN). Polar residues predominate over residues 63 to 72 (LQHPSSSFST). The segment covering 139-150 (PPKGSRSPKGSP) has biased composition (low complexity).

The protein belongs to the CCR4/nocturin family.

The chain is Protein angel homolog 2 (angel2) from Danio rerio (Zebrafish).